The sequence spans 576 residues: Proton pump-interactor 3B (576 aa).

The segment at 34–63 is disordered; that stretch reads SEVTTDEEEDTIFSGGDSSSGLAAEEDSSG. Coiled-coil stretches lie at residues 132 to 155 and 205 to 241; these read RMVIEEKKKEFDTLLEALRNLRCT and EKEASINRVKSMALELNEVKNELDAITWKINDLSDKL. Positions 369–381 are enriched in basic and acidic residues; it reads RSEKVHKMNREDS. The tract at residues 369-395 is disordered; that stretch reads RSEKVHKMNREDSSSNSSEDGNVITDK. The stretch at 411–467 forms a coiled coil; that stretch reads KKKEEEIDEEALKERKREEQLEKARLVMERKRKLQEKAAAKAAIRAQKEAEKKLKAI. A helical transmembrane segment spans residues 555–575; the sequence is WVWGLSSAALAVSLVLVVLLL.

Belongs to the plant Proton pump-interactor protein family.

Its subcellular location is the cell membrane. The protein localises to the endoplasmic reticulum membrane. Functionally, may regulate plasma membrane ATPase activity. This Arabidopsis thaliana (Mouse-ear cress) protein is Proton pump-interactor 3B (PPI3B).